Consider the following 217-residue polypeptide: Guanylate kinase (217 aa).

The segment covering 1 to 10 (MAVSSTTLSS) has biased composition (low complexity). The tract at residues 1–30 (MAVSSTTLSSPTPPECLQQQEAPRPPATRG) is disordered. The Guanylate kinase-like domain occupies 30 to 208 (GRLVVLTGPS…ALQELEALLY (179 aa)). An ATP-binding site is contributed by 37–44 (GPSGVGKG).

Belongs to the guanylate kinase family.

Its subcellular location is the cytoplasm. The catalysed reaction is GMP + ATP = GDP + ADP. The enzyme catalyses dZMP + ATP = dZDP + ADP. It participates in purine metabolism. Its function is as follows. Essential for recycling GMP and indirectly, cGMP. (Microbial infection) Catalyzes the phosphorylation of dZMP to dZDP, when the bacterium is infected by a phage that produces the substrate for the synthesis of dZTP (2- amino-2'-deoxyadenosine 5'-triphosphate), which is then used by the phage as a DNA polymerase substrate. In Synechococcus sp. (strain JA-3-3Ab) (Cyanobacteria bacterium Yellowstone A-Prime), this protein is Guanylate kinase.